The chain runs to 119 residues: Large ribosomal subunit protein uL18 (119 aa).

Positions 1-25 (MITKIDKNKVRKKRHARVRSKISGT) are disordered. The span at 9 to 20 (KVRKKRHARVRS) shows a compositional bias: basic residues.

Belongs to the universal ribosomal protein uL18 family. Part of the 50S ribosomal subunit; part of the 5S rRNA/L5/L18/L25 subcomplex. Contacts the 5S and 23S rRNAs.

Functionally, this is one of the proteins that bind and probably mediate the attachment of the 5S RNA into the large ribosomal subunit, where it forms part of the central protuberance. The polypeptide is Large ribosomal subunit protein uL18 (Listeria innocua serovar 6a (strain ATCC BAA-680 / CLIP 11262)).